A 608-amino-acid chain; its full sequence is Putative pentatricopeptide repeat-containing protein At1g16830 (608 aa).

PPR repeat units follow at residues 107-141 (KPRV…GFVP), 142-172 (NTRA…IRFR), 173-210 (NFFS…GFYP), 211-245 (NRER…GISV), 246-280 (SVNV…GCSP), 281-315 (NLVT…GLAP), 316-350 (DIVL…KLVP), 351-381 (DQYT…IGTD), 383-417 (DLVT…DFAL), 418-452 (DCYT…KKHL), 453-487 (DAHF…KYPL), 488-522 (DVVS…GIYP), and 523-557 (NRRT…GVEL).

This sequence belongs to the PPR family. P subfamily.

The chain is Putative pentatricopeptide repeat-containing protein At1g16830 from Arabidopsis thaliana (Mouse-ear cress).